The following is a 257-amino-acid chain: Probable S-adenosylmethionine-dependent methyltransferase MSMEG_2350/MSMEI_2290 (257 aa).

The protein belongs to the methyltransferase superfamily.

Probable S-adenosylmethionine-dependent methyltransferase required for the 6-O-methylation of the polysaccharide backbone of 6-O-methylglucosyl lipopolysaccharides (MGLP). This Mycolicibacterium smegmatis (strain ATCC 700084 / mc(2)155) (Mycobacterium smegmatis) protein is Probable S-adenosylmethionine-dependent methyltransferase MSMEG_2350/MSMEI_2290.